Consider the following 553-residue polypeptide: 4-coumarate--CoA ligase (553 aa).

Positions 198, 199, 200, 201, 202, and 206 each coordinate ATP. Tyrosine 248 and serine 252 together coordinate (E)-4-coumaroyl-AMP. Lysine 269 provides a ligand contact to CoA. The segment at 271 to 340 is SBD1; that stretch reads EIVPFLELIQ…AKFPNAKLGQ (70 aa). 5 residues coordinate (E)-4-coumaroyl-AMP: alanine 318, glutamine 340, glycine 341, threonine 345, and methionine 353. The ATP site is built by glutamine 340, glycine 341, and threonine 345. The tract at residues 341 to 408 is SBD2; the sequence is GYGMTEAGPV…IRGDQIMKGY (68 aa). Residues aspartate 429 and arginine 444 each coordinate ATP. Positions 446 and 450 each coordinate (E)-4-coumaroyl-AMP. CoA-binding residues include lysine 452 and glycine 453. Lysine 535 is a binding site for ATP.

The protein belongs to the ATP-dependent AMP-binding enzyme family. Mg(2+) serves as cofactor.

It catalyses the reaction (E)-4-coumarate + ATP + CoA = (E)-4-coumaroyl-CoA + AMP + diphosphate. The enzyme catalyses (E)-4-coumarate + ATP + H(+) = (E)-4-coumaroyl-AMP + diphosphate. The catalysed reaction is (E)-4-coumaroyl-AMP + CoA = (E)-4-coumaroyl-CoA + AMP + H(+). The protein operates within phytoalexin biosynthesis; 3,4',5-trihydroxystilbene biosynthesis; 3,4',5-trihydroxystilbene from trans-4-coumarate: step 1/2. In terms of biological role, carboxylate--CoA ligase that may use 4-coumarate as substrate. Follows a two-step reaction mechanism, wherein the carboxylate substrate first undergoes adenylation by ATP, followed by a thioesterification in the presence of CoA to yield the final CoA thioester. This is 4-coumarate--CoA ligase from Vanilla planifolia (Vanilla).